The sequence spans 417 residues: Lactose permease (417 aa).

M1 bears the N-formylmethionine; partial mark. Topologically, residues 1–7 (MYYLKNT) are cytoplasmic. The helical transmembrane segment at 8–34 (NFWMFGLFFFFYFFIMGAYFPFFPIWL) threads the bilayer. Residues 35 to 41 (HDINHIS) lie on the Periplasmic side of the membrane. A helical membrane pass occupies residues 42–70 (KSDTGIIFAAISLFSLLFQPLFGLLSDKL). Residues 71–74 (GLRK) lie on the Cytoplasmic side of the membrane. A helical membrane pass occupies residues 75 to 100 (YLLWIITGMLVMFAPFFIFIFGPLLQ). The Periplasmic segment spans residues 101-104 (YNIL). A helical transmembrane segment spans residues 105 to 129 (VGSIVGGIYLGFCFNAGAPAVEAFI). Residues 130 to 140 (EKVSRRSNFEF) are Cytoplasmic-facing. A helical transmembrane segment spans residues 141–163 (GRARMFGCVGWALCASIVGIMFT). The Periplasmic portion of the chain corresponds to 164-166 (INN). Residues 167-186 (QFVFWLGSGCALILAVLLFF) form a helical membrane-spanning segment. The Cytoplasmic portion of the chain corresponds to 187 to 220 (AKTDAPSSATVANAVGANHSAFSLKLALELFRQP). The helical transmembrane segment at 221–249 (KLWFLSLYVIGVSCTYDVFDQQFANFFTS) threads the bilayer. Over 250-253 (FFAT) the chain is Periplasmic. The chain crosses the membrane as a helical span at residues 254-278 (GEQGTRVFGYVTTMGELLNASIMFF). Topologically, residues 279–288 (APLIINRIGG) are cytoplasmic. A helical membrane pass occupies residues 289-308 (KNALLLAGTIMSVRIIGSSF). The Periplasmic portion of the chain corresponds to 309 to 311 (ATS). Residues 312–334 (ALEVVILKTLHMFEVPFLLVGCF) traverse the membrane as a helical segment. Over 335 to 346 (KYITSQFEVRFS) the chain is Cytoplasmic. Residues 347 to 374 (ATIYLVCFCFFKQLAMIFMSVLAGNMYE) traverse the membrane as a helical segment. Over 375–377 (SIG) the chain is Periplasmic. The chain crosses the membrane as a helical span at residues 378 to 398 (FQGAYLVLGLVALGFTLISVF). At 399-417 (TLSGPGPLSLLRRQVNEVA) the chain is on the cytoplasmic side.

In terms of assembly, monomer.

The protein localises to the cell inner membrane. The catalysed reaction is lactose(in) + H(+)(in) = lactose(out) + H(+)(out). It carries out the reaction melibiose(in) + H(+)(in) = melibiose(out) + H(+)(out). Inhibited by the proton ionophore carbonyl cyanide m-chlorophenylhydrazone (CCCP). Responsible for transport of beta-galactosides into the cell, with the concomitant import of a proton (symport system). Can transport lactose, melibiose, the synthetic disaccharide lactulose or the analog methyl-1-thio-beta,D-galactopyranoside (TMG), but not sucrose or fructose. The substrate specificity is directed toward the galactopyranosyl moiety of the substrate. The protein is Lactose permease of Escherichia coli (strain K12).